Reading from the N-terminus, the 634-residue chain is Transmembrane and coiled-coil domain-containing protein 4 (634 aa).

Residues 150 to 190 (EELDVLEEMFLESLKEIKEEESEMAEASRKKKENRRKWKRY) are a coiled coil. The next 3 helical transmembrane spans lie at 203-223 (VIGV…ATII), 231-251 (LGSA…GAGL), and 346-366 (LSGI…ANVI). The interval 542-612 (EPRQAAAAAS…ERPPICSHGM (71 aa)) is disordered. Polar residues predominate over residues 552 to 583 (SGETPHQVGQTQGPISGDTSKLAMSTDPSQAQ).

This sequence belongs to the TMCO4 family.

Its subcellular location is the membrane. This is Transmembrane and coiled-coil domain-containing protein 4 (TMCO4) from Homo sapiens (Human).